The sequence spans 430 residues: Glutamyl-tRNA reductase (430 aa).

Substrate is bound by residues 50–53, S108, 113–115, and Q119; these read TCNR and EPQ. The active-site Nucleophile is the C51. 188–193 contacts NADP(+); it reads GAGEMA.

Belongs to the glutamyl-tRNA reductase family. Homodimer.

The enzyme catalyses (S)-4-amino-5-oxopentanoate + tRNA(Glu) + NADP(+) = L-glutamyl-tRNA(Glu) + NADPH + H(+). The protein operates within porphyrin-containing compound metabolism; protoporphyrin-IX biosynthesis; 5-aminolevulinate from L-glutamyl-tRNA(Glu): step 1/2. In terms of biological role, catalyzes the NADPH-dependent reduction of glutamyl-tRNA(Glu) to glutamate 1-semialdehyde (GSA). This Desulfovibrio desulfuricans (strain ATCC 27774 / DSM 6949 / MB) protein is Glutamyl-tRNA reductase.